We begin with the raw amino-acid sequence, 184 residues long: Elongation factor P (184 aa).

Belongs to the elongation factor P family.

It is found in the cytoplasm. It participates in protein biosynthesis; polypeptide chain elongation. In terms of biological role, involved in peptide bond synthesis. Stimulates efficient translation and peptide-bond synthesis on native or reconstituted 70S ribosomes in vitro. Probably functions indirectly by altering the affinity of the ribosome for aminoacyl-tRNA, thus increasing their reactivity as acceptors for peptidyl transferase. The protein is Elongation factor P of Paracidovorax citrulli (strain AAC00-1) (Acidovorax citrulli).